The sequence spans 377 residues: Chaperone protein DnaJ (377 aa).

Positions 5–70 (DYYEILGVSK…QKRAAYDQYG (66 aa)) constitute a J domain. The segment at 132–210 (GVTKEIRIPT…CHGHGRVEKT (79 aa)) adopts a CR-type zinc-finger fold. Residues C145, C148, C162, C165, C184, C187, C198, and C201 each coordinate Zn(2+). CXXCXGXG motif repeat units lie at residues 145–152 (CDVCHGSG), 162–169 (CPTCHGAG), 184–191 (CPHCQGRG), and 198–205 (CNKCHGHG).

This sequence belongs to the DnaJ family. In terms of assembly, homodimer. The cofactor is Zn(2+).

Its subcellular location is the cytoplasm. Its function is as follows. Participates actively in the response to hyperosmotic and heat shock by preventing the aggregation of stress-denatured proteins and by disaggregating proteins, also in an autonomous, DnaK-independent fashion. Unfolded proteins bind initially to DnaJ; upon interaction with the DnaJ-bound protein, DnaK hydrolyzes its bound ATP, resulting in the formation of a stable complex. GrpE releases ADP from DnaK; ATP binding to DnaK triggers the release of the substrate protein, thus completing the reaction cycle. Several rounds of ATP-dependent interactions between DnaJ, DnaK and GrpE are required for fully efficient folding. Also involved, together with DnaK and GrpE, in the DNA replication of plasmids through activation of initiation proteins. This is Chaperone protein DnaJ from Klebsiella pneumoniae (strain 342).